The primary structure comprises 548 residues: Fumarate hydratase class I, aerobic (548 aa).

Cys105, Cys224, and Cys318 together coordinate [4Fe-4S] cluster.

It belongs to the class-I fumarase family. Homodimer. The cofactor is [4Fe-4S] cluster.

The catalysed reaction is (S)-malate = fumarate + H2O. It carries out the reaction oxaloacetate = enol-oxaloacetate. It participates in carbohydrate metabolism; tricarboxylic acid cycle; (S)-malate from fumarate: step 1/1. In terms of biological role, catalyzes the reversible hydration of fumarate to (S)-malate. Functions as an aerobic enzyme in the direction of malate formation as part of the citric acid cycle. Accounts for about 80% of the fumarase activity when the bacteria grow aerobically. To a lesser extent, also displays D-tartrate dehydratase activity in vitro, but is not able to convert (R)-malate, L-tartrate or meso-tartrate. Can also catalyze the isomerization of enol- to keto-oxaloacetate. This is Fumarate hydratase class I, aerobic from Escherichia coli O6:H1 (strain CFT073 / ATCC 700928 / UPEC).